Reading from the N-terminus, the 268-residue chain is Chymotrypsin-C (268 aa).

The first 16 residues, 1–16, serve as a signal peptide directing secretion; the sequence is MLGITVFTTFLAYASS. A propeptide spans 17–29 (activation peptide); the sequence is CGAPIFQPNLSAR. 5 cysteine pairs are disulfide-bonded: C17/C141, C59/C75, C155/C222, C186/C202, and C212/C243. N25 carries an N-linked (GlcNAc...) asparagine glycan. Positions 30-268 constitute a Peptidase S1 domain; that stretch reads VVGGEDAIPH…IDWINQKLQL (239 aa). Catalysis depends on charge relay system residues H74 and D121. S216 (charge relay system) is an active-site residue.

It belongs to the peptidase S1 family. Elastase subfamily. As to quaternary structure, monomer. The zymogen is secreted as a ternary complex composed of procarboxypeptidase A, chymotrypsinogen C and proproteinase E. Pancreas.

It is found in the secreted. The protein localises to the extracellular space. The catalysed reaction is Preferential cleavage: Leu-|-Xaa, Tyr-|-Xaa, Phe-|-Xaa, Met-|-Xaa, Trp-|-Xaa, Gln-|-Xaa, Asn-|-Xaa.. Regulates activation and degradation of trypsinogens and procarboxypeptidases by targeting specific cleavage sites within their zymogen precursors. Has chymotrypsin-type protease activity and hypocalcemic activity. This is Chymotrypsin-C (CTRC) from Bos taurus (Bovine).